The sequence spans 177 residues: Large ribosomal subunit protein uL6 (177 aa).

It belongs to the universal ribosomal protein uL6 family. As to quaternary structure, part of the 50S ribosomal subunit.

In terms of biological role, this protein binds to the 23S rRNA, and is important in its secondary structure. It is located near the subunit interface in the base of the L7/L12 stalk, and near the tRNA binding site of the peptidyltransferase center. In Photobacterium profundum (strain SS9), this protein is Large ribosomal subunit protein uL6.